We begin with the raw amino-acid sequence, 160 residues long: MMAEKKKKELPRKVVADNRRARFDYDIGEVFEAGIALKGTEVKALRTGKATIHESYAGGKNGELWLFNSYVPEYLEANRFNHEPRRPRKLLMHKRQIHKLTVAVEREGMTVVPLKIYFNEQGRAKVEVALAKGRKAHDKREAVKERDWNRDKARLMRDRG.

A disordered region spans residues 134 to 160 (RKAHDKREAVKERDWNRDKARLMRDRG). The segment covering 138-160 (DKREAVKERDWNRDKARLMRDRG) has biased composition (basic and acidic residues).

This sequence belongs to the SmpB family.

It localises to the cytoplasm. Its function is as follows. Required for rescue of stalled ribosomes mediated by trans-translation. Binds to transfer-messenger RNA (tmRNA), required for stable association of tmRNA with ribosomes. tmRNA and SmpB together mimic tRNA shape, replacing the anticodon stem-loop with SmpB. tmRNA is encoded by the ssrA gene; the 2 termini fold to resemble tRNA(Ala) and it encodes a 'tag peptide', a short internal open reading frame. During trans-translation Ala-aminoacylated tmRNA acts like a tRNA, entering the A-site of stalled ribosomes, displacing the stalled mRNA. The ribosome then switches to translate the ORF on the tmRNA; the nascent peptide is terminated with the 'tag peptide' encoded by the tmRNA and targeted for degradation. The ribosome is freed to recommence translation, which seems to be the essential function of trans-translation. This Azorhizobium caulinodans (strain ATCC 43989 / DSM 5975 / JCM 20966 / LMG 6465 / NBRC 14845 / NCIMB 13405 / ORS 571) protein is SsrA-binding protein.